Here is a 233-residue protein sequence, read N- to C-terminus: MLTKKQLDLLEFIHKRVQRDGVPPSFDEMKEALDLRSKSGIHRLITALEERGFIRRLAHRARAIEIVKLPETLGGAARGGFTPRVIEGDKPDAPLPAGAQAVSSADAVALPLVGRIAAGLPIEAINQNSASVAVPGQMLSGKGDHYALEVKGDSMIDAGINDGDVVVIRETSVADNGDIVVALIEDHEATLKRYMRKGSSIALEAANPAYETRVFTEDKVKVQGKLVGLIRTY.

The segment at residues 26–46 is a DNA-binding region (H-T-H motif); the sequence is FDEMKEALDLRSKSGIHRLIT. Residues Ser154 and Lys192 each act as for autocatalytic cleavage activity in the active site.

It belongs to the peptidase S24 family. In terms of assembly, homodimer.

The enzyme catalyses Hydrolysis of Ala-|-Gly bond in repressor LexA.. In terms of biological role, represses a number of genes involved in the response to DNA damage (SOS response), including recA and lexA. In the presence of single-stranded DNA, RecA interacts with LexA causing an autocatalytic cleavage which disrupts the DNA-binding part of LexA, leading to derepression of the SOS regulon and eventually DNA repair. In Roseobacter denitrificans (strain ATCC 33942 / OCh 114) (Erythrobacter sp. (strain OCh 114)), this protein is LexA repressor.